The primary structure comprises 607 residues: MAGFPGKEAGPPGGWRKCQEDESPENERHENFYAEIDDFAPSVLTPTGSDSGAGEEDDDGLYQVPTHWPPLMAPTGLSGERVPCRTQAAVTSNTGNSPGSRHTSCPFTLPRGAQPPAPAHQKPTAPTPKPRSRECGPSKTPDPFSWFRKTSCTEGGADSTSRSFMYQKGFEEGLAGLGLDDKSDCESEDESNFRRPSSHSALKQKNGGKGKPSGLFEHLAAHGREFSKLSKHAAQLKRLSGSVMNVLNLDDAQDTRQAKAQRKESMRVPIVTHLTNHVPVIKPACSLFLEGAPGVGKTTMLNHLKAVFGDLTIVVPEPMRYWTHVYENAIKAMHKNVTRARHGREDTSAEVLACQMKFTTPFRVLASRKRSLLVTESGARSVAPLDCWILHDRHLLSASVVFPLMLLRSQLLSYSDFIQVLATFTADPGDTIVWMKLNVEENMRRLKKRGRKHESGLDAGYLKSVNDAYHAVYCAWLLTQYFAPEDIVKVCAGLTTITTVCHQSHTPIIRSGVAEKLYKNSIFSVLKEVIQPFRADAVLLEVCLAFTRTLAYLQFVLVDLSEFQDDLPGCWTEIYMQALKNPAIRSQFFDWAGLSKVISDFERGNRD.

Disordered stretches follow at residues 1–160 (MAGF…ADST) and 180–215 (DDKSDCESEDESNFRRPSSHSALKQKNGGKGKPSGL). Basic and acidic residues predominate over residues 17 to 32 (KCQEDESPENERHENF). 3 stretches are compositionally biased toward polar residues: residues 88–106 (AAVTSNTGNSPGSRHTSCP), 148–160 (RKTSCTEGGADST), and 194–203 (RRPSSHSALK). 291–298 (GAPGVGKT) serves as a coordination point for ATP. E317 acts as the Proton acceptor in catalysis. Residue Q355 coordinates substrate. An ATP-binding site is contributed by R445. R451 contacts substrate.

It belongs to the herpesviridae thymidine kinase family. As to quaternary structure, homodimer.

It localises to the virion tegument. It is found in the host nucleus. The enzyme catalyses thymidine + ATP = dTMP + ADP + H(+). Functionally, catalyzes the transfer of the gamma-phospho group of ATP to thymidine to generate dTMP in the salvage pathway of pyrimidine synthesis. The dTMP serves as a substrate for DNA polymerase during viral DNA replication. Allows the virus to be reactivated and to grow in non-proliferative cells lacking a high concentration of phosphorylated nucleic acid precursors. In Homo sapiens (Human), this protein is Thymidine kinase.